A 206-amino-acid chain; its full sequence is Small ribosomal subunit protein uS4 (206 aa).

One can recognise an S4 RNA-binding domain in the interval 96 to 156; that stretch reads GRLDNVVYRM…EKAKKQARIK (61 aa).

This sequence belongs to the universal ribosomal protein uS4 family. In terms of assembly, part of the 30S ribosomal subunit. Contacts protein S5. The interaction surface between S4 and S5 is involved in control of translational fidelity.

In terms of biological role, one of the primary rRNA binding proteins, it binds directly to 16S rRNA where it nucleates assembly of the body of the 30S subunit. Functionally, with S5 and S12 plays an important role in translational accuracy. The chain is Small ribosomal subunit protein uS4 from Aeromonas salmonicida (strain A449).